A 134-amino-acid polypeptide reads, in one-letter code: T-cell receptor alpha chain V region RL-5 (134 aa).

A signal peptide spans 1 to 20 (MFSASCSVTVVVLLITVRRT). Positions 21–114 (NGASVTQTEG…DSAVYYCALR (94 aa)) are v segment. The interval 115-134 (RGASNKLTLGTGTLLKVELN) is j segment. Residue Asn134 is glycosylated (N-linked (GlcNAc...) asparagine).

Post-translationally, rearrangement with the C region would elongate the sequence with Ile-Thr-; which creates a potential N-glycosylation site at Asn-134.

The polypeptide is T-cell receptor alpha chain V region RL-5 (Oryctolagus cuniculus (Rabbit)).